We begin with the raw amino-acid sequence, 129 residues long: Small ribosomal subunit protein uS11 (129 aa).

This sequence belongs to the universal ribosomal protein uS11 family. Part of the 30S ribosomal subunit. Interacts with proteins S7 and S18. Binds to IF-3.

Located on the platform of the 30S subunit, it bridges several disparate RNA helices of the 16S rRNA. Forms part of the Shine-Dalgarno cleft in the 70S ribosome. This chain is Small ribosomal subunit protein uS11, found in Histophilus somni (strain 129Pt) (Haemophilus somnus).